The following is a 41-amino-acid chain: MPRSPSKSSPKKGSPRKASPKRGGKGAKRAGKGGRRRTVVK.

The tract at residues 1 to 41 (MPRSPSKSSPKKGSPRKASPKRGGKGAKRAGKGGRRRTVVK) is disordered. Short sequence motifs (SPKK motif) lie at residues 4-7 (SPSK), 9-12 (SPKK), 14-17 (SPRK), and 19-22 (SPKR). The span at 9–41 (SPKKGSPRKASPKRGGKGAKRAGKGGRRRTVVK) shows a compositional bias: basic residues. A phosphoserine mark is found at serine 14 and serine 19.

It belongs to the histone H2B family. As to quaternary structure, the nucleosome is a histone octamer containing two molecules each of H2A, H2B, H3 and H4 assembled in one H3-H4 heterotetramer and two H2A-H2B heterodimers. The octamer wraps approximately 147 bp of DNA. Monoubiquitination gives a specific tag for epigenetic transcriptional activation and is also prerequisite for histone H3 'Lys-4' and 'Lys-79' methylation. In terms of processing, phosphorylated on SPKK motifs 3 and 4; which may regulate DNA binding. Dephosphorylated during maturation of spermatids to mature sperm and rephosphorylated at fertilization.

It localises to the nucleus. The protein localises to the chromosome. In terms of biological role, core component of nucleosome. Nucleosomes wrap and compact DNA into chromatin, limiting DNA accessibility to the cellular machineries which require DNA as a template. Histones thereby play a central role in transcription regulation, DNA repair, DNA replication and chromosomal stability. DNA accessibility is regulated via a complex set of post-translational modifications of histones, also called histone code, and nucleosome remodeling. This is Histone H2B.3, sperm from Echinus esculentus (Sea urchin).